The chain runs to 90 residues: Probable Fe(2+)-trafficking protein (90 aa).

The protein belongs to the Fe(2+)-trafficking protein family.

In terms of biological role, could be a mediator in iron transactions between iron acquisition and iron-requiring processes, such as synthesis and/or repair of Fe-S clusters in biosynthetic enzymes. This chain is Probable Fe(2+)-trafficking protein, found in Azotobacter vinelandii (strain DJ / ATCC BAA-1303).